The sequence spans 229 residues: Putative 3-methyladenine DNA glycosylase (229 aa).

It belongs to the DNA glycosylase MPG family.

The protein is Putative 3-methyladenine DNA glycosylase of Enterococcus faecalis (strain ATCC 700802 / V583).